We begin with the raw amino-acid sequence, 217 residues long: Probable transaldolase (217 aa).

The Schiff-base intermediate with substrate role is filled by lysine 83.

This sequence belongs to the transaldolase family. Type 3B subfamily.

Its subcellular location is the cytoplasm. The enzyme catalyses D-sedoheptulose 7-phosphate + D-glyceraldehyde 3-phosphate = D-erythrose 4-phosphate + beta-D-fructose 6-phosphate. It functions in the pathway carbohydrate degradation; pentose phosphate pathway; D-glyceraldehyde 3-phosphate and beta-D-fructose 6-phosphate from D-ribose 5-phosphate and D-xylulose 5-phosphate (non-oxidative stage): step 2/3. In terms of biological role, transaldolase is important for the balance of metabolites in the pentose-phosphate pathway. The polypeptide is Probable transaldolase (Anaeromyxobacter sp. (strain K)).